The sequence spans 553 residues: Putative transport protein YidE (553 aa).

5 helical membrane-spanning segments follow: residues 4–24, 28–48, 65–85, 95–115, and 158–178; these read IALT…IGNV, GIGL…HFVS, FGLI…FFAS, LFAV…HKLF, and MSYA…MWML. RCK C-terminal domains follow at residues 191-276 and 279-361; these read QQHE…VIGQ and DTSL…VLGN. Transmembrane regions (helical) follow at residues 371–391, 393–413, 439–459, 464–484, 493–513, and 533–553; these read MLPV…PVFV, GFPA…ALIL, IVLF…NTLV, LSWI…VGIL, YLTM…LAFA, and LVMF…WSIG.

Belongs to the AAE transporter (TC 2.A.81) family. YidE subfamily.

The protein localises to the cell membrane. The polypeptide is Putative transport protein YidE (Shigella boydii serotype 18 (strain CDC 3083-94 / BS512)).